The chain runs to 504 residues: MKVVNVPSNGREKFKKNWKFCVGTGRLGLALQKEYLDHLKLVQEKIGFRYIRGHGLLSDDVGIYREVEIDGEMKPFYNFTYIDRIVDSYLALNIRPFIEFGFMPKALASGDQTVFYWKGNVTPPKDYNKWRDLIVAVVSHFIERYGIEEVRTWLFEVWNEPNLVNFWKDANKQEYFKLYEVTARAVKSVDPHLQVGGPAICGGSDEWITDFLHFCAERRVPVDFVSRHAYTSKAPHKKTFEYYYQELELEPPEDMLEQFKTVRALIRQSPFPHLPLHITEYNTSYSPINPVHDTALNAAYIARILSEGGDYVDSFSYWTFSDVFEEMDVPKALFHGGFGLVALHSIPKPTFHAFTFFNALGDELLYRDGEMIVTRRKDGSIAAVLWNLVMEKGEGLTKEVQLVIPVSFSAVFIKRQIVNEQYGNAWRVWKQMGRPRFPSRQAVETLPSAQPHVMTEQRRATDGVIHLSIVLSKNEVTLIEIEQVRDETSTYVGLDDGEITSYSS.

Residue Glu-160 is the Proton donor of the active site. The Nucleophile role is filled by Glu-280.

It belongs to the glycosyl hydrolase 39 family.

It carries out the reaction Hydrolysis of (1-&gt;4)-beta-D-xylans, to remove successive D-xylose residues from the non-reducing termini.. The chain is Beta-xylosidase (xynB) from Geobacillus stearothermophilus (Bacillus stearothermophilus).